A 504-amino-acid polypeptide reads, in one-letter code: Pre-mRNA-processing factor 19 (504 aa).

At S2 the chain carries N-acetylserine. The U-box domain maps to 2 to 73; it reads SLICSISNEV…KPPSATSIPA (72 aa). The segment at 68–223 is may mediate interaction with PSMC5; it reads ATSIPAILKA…VGLHSASIPG (156 aa). N6-acetyllysine is present on residues K122, K179, K244, and K261. Residues 219-259 form a WD 1 repeat; the sequence is ASIPGILALDLCPSDTNKILTGGADKNVVVFDKSSEQILAT. 6 WD repeats span residues 262–301, 304–345, 348–387, 390–429, 433–472, and 473–503; these read GHTK…CVQV, AHES…TKVT, TSGC…NVAN, GHSG…NFKT, DNNF…LHFT, and EHSG…KFYS.

Belongs to the WD repeat PRP19 family. Homotetramer. Component of activated, catalytic and post-catalytic spliceosomes. Component of the Prp19 complex/PRP19C/Nineteen complex/NTC and related complexes described as PRP19-CDC5L splicing complex and PSO4 complex. A homotetramer of PRPF19, CDC5L, PLRG1 and BCAS2 constitute the core of those complexes. The interaction with CDC5L, PLRG1 and BCAS2 is direct within this core complex. At least three less stably associated proteins CTNNBL1, CWC15 and HSPA8 are found in the Prp19 complex. The Prp19 complex associates with the spliceosome during its assembly and remodeling recruiting additional proteins. Component of the XAB2 complex, a multimeric protein complex composed of XAB2, PRPF19, AQR, ZNF830, ISY1, and PPIE. Interacts with CWC22 and EIF4A3 in an RNA-independent manner. Interacts with RPA1 and RPA2; the PRP19-CDC5L complex is recruited to the sites of DNA repair where it interacts with the replication protein A complex (RPA). Interacts with SETMAR; required for SETMAR recruitment to site of DNA damage. Interacts with U2AF2; the interaction is direct and recruits the Prp19 complex to RNA polymerase II C-terminal domain (CTD) and the pre-mRNA. Interacts with PRPF3. Interacts with APEX1, DNTT and PSMB4. Interacts with PSMC5. Interacts with KNSTRN. Interacts (via N-terminus) with CDC5L. Interacts with KHDC4. Interacts with USB1. Interacts with DDX41. Ubiquitous. Weakly expressed in senescent cells of different tissue origins. Highly expressed in tumor cell lines.

Its subcellular location is the nucleus. The protein localises to the nucleoplasm. The protein resides in the cytoplasm. It localises to the cytoskeleton. It is found in the spindle. Its subcellular location is the lipid droplet. It carries out the reaction S-ubiquitinyl-[E2 ubiquitin-conjugating enzyme]-L-cysteine + [acceptor protein]-L-lysine = [E2 ubiquitin-conjugating enzyme]-L-cysteine + N(6)-ubiquitinyl-[acceptor protein]-L-lysine.. It participates in protein modification; protein ubiquitination. In terms of biological role, ubiquitin-protein ligase which is a core component of several complexes mainly involved pre-mRNA splicing and DNA repair. Required for pre-mRNA splicing as component of the spliceosome. Core component of the PRP19C/Prp19 complex/NTC/Nineteen complex which is part of the spliceosome and participates in its assembly, its remodeling and is required for its activity. During assembly of the spliceosome, mediates 'Lys-63'-linked polyubiquitination of the U4 spliceosomal protein PRPF3. Ubiquitination of PRPF3 allows its recognition by the U5 component PRPF8 and stabilizes the U4/U5/U6 tri-snRNP spliceosomal complex. Recruited to RNA polymerase II C-terminal domain (CTD) and the pre-mRNA, it may also couple the transcriptional and spliceosomal machineries. The XAB2 complex, which contains PRPF19, is also involved in pre-mRNA splicing, transcription and transcription-coupled repair. Beside its role in pre-mRNA splicing PRPF19, as part of the PRP19-CDC5L complex, plays a role in the DNA damage response/DDR. It is recruited to the sites of DNA damage by the RPA complex where PRPF19 directly ubiquitinates RPA1 and RPA2. 'Lys-63'-linked polyubiquitination of the RPA complex allows the recruitment of the ATR-ATRIP complex and the activation of ATR, a master regulator of the DNA damage response. May also play a role in DNA double-strand break (DSB) repair by recruiting the repair factor SETMAR to altered DNA. As part of the PSO4 complex may also be involved in the DNA interstrand cross-links/ICLs repair process. In addition, may also mediate 'Lys-48'-linked polyubiquitination of substrates and play a role in proteasomal degradation. May play a role in the biogenesis of lipid droplets. May play a role in neural differentiation possibly through its function as part of the spliceosome. This Homo sapiens (Human) protein is Pre-mRNA-processing factor 19.